The sequence spans 373 residues: Transcription factor bHLH87 (373 aa).

Residues 127 to 227 (SAESENREIT…GGSSNISFQH (101 aa)) are disordered. The segment covering 188–218 (PQDDSEKGGFKLIYDENQSKSKKPRTEKERG) has biased composition (basic and acidic residues). In terms of domain architecture, bHLH spans 275–324 (ISTDPQTVAARQRRERISEKIRVLQTLVPGGTKMDTASMLDEAANYLKFL).

Homodimer. In terms of tissue distribution, flowers.

It is found in the nucleus. The chain is Transcription factor bHLH87 (BHLH87) from Arabidopsis thaliana (Mouse-ear cress).